The sequence spans 265 residues: NAD kinase 2 (265 aa).

N51 serves as the catalytic Proton acceptor. Residues 122 to 123, R149, D151, 162 to 167, A186, and N226 contribute to the NAD(+) site; these read NE and TAYNKS.

This sequence belongs to the NAD kinase family. It depends on a divalent metal cation as a cofactor.

It is found in the cytoplasm. The enzyme catalyses NAD(+) + ATP = ADP + NADP(+) + H(+). Its function is as follows. Involved in the regulation of the intracellular balance of NAD and NADP, and is a key enzyme in the biosynthesis of NADP. Catalyzes specifically the phosphorylation on 2'-hydroxyl of the adenosine moiety of NAD to yield NADP. This chain is NAD kinase 2, found in Halalkalibacterium halodurans (strain ATCC BAA-125 / DSM 18197 / FERM 7344 / JCM 9153 / C-125) (Bacillus halodurans).